We begin with the raw amino-acid sequence, 362 residues long: Alanine racemase (362 aa).

Lysine 33 (proton acceptor; specific for D-alanine) is an active-site residue. Residue lysine 33 is modified to N6-(pyridoxal phosphate)lysine. Arginine 129 serves as a coordination point for substrate. The active-site Proton acceptor; specific for L-alanine is the tyrosine 254. Methionine 302 is a substrate binding site.

This sequence belongs to the alanine racemase family. The cofactor is pyridoxal 5'-phosphate.

It catalyses the reaction L-alanine = D-alanine. The protein operates within amino-acid biosynthesis; D-alanine biosynthesis; D-alanine from L-alanine: step 1/1. In terms of biological role, catalyzes the interconversion of L-alanine and D-alanine. May also act on other amino acids. This chain is Alanine racemase (alr), found in Xylella fastidiosa (strain 9a5c).